A 1463-amino-acid polypeptide reads, in one-letter code: DNA-directed RNA polymerase subunit beta'' (1463 aa).

Positions 239, 312, 319, and 322 each coordinate Zn(2+). 2 disordered regions span residues 836–869 (TFTG…ETRM) and 987–1007 (TNRS…AQAR). The segment covering 860–869 (AANSSHETRM) has biased composition (polar residues). Basic residues predominate over residues 987–996 (TNRSKTRRNA). Residues 997-1007 (SGKTQVKAQAR) are compositionally biased toward polar residues.

This sequence belongs to the RNA polymerase beta' chain family. RpoC2 subfamily. As to quaternary structure, in plastids the minimal PEP RNA polymerase catalytic core is composed of four subunits: alpha, beta, beta', and beta''. When a (nuclear-encoded) sigma factor is associated with the core the holoenzyme is formed, which can initiate transcription. The cofactor is Zn(2+).

The protein resides in the plastid. The protein localises to the chloroplast. It catalyses the reaction RNA(n) + a ribonucleoside 5'-triphosphate = RNA(n+1) + diphosphate. In terms of biological role, DNA-dependent RNA polymerase catalyzes the transcription of DNA into RNA using the four ribonucleoside triphosphates as substrates. The protein is DNA-directed RNA polymerase subunit beta'' of Nephroselmis olivacea (Green alga).